The primary structure comprises 275 residues: 4-hydroxy-tetrahydrodipicolinate reductase (275 aa).

Position 12-17 (12-17 (GAAGRM)) interacts with NAD(+). Arginine 39 contacts NADP(+). NAD(+) contacts are provided by residues 102 to 104 (GTT) and 126 to 129 (SGNM). Histidine 160 (proton donor/acceptor) is an active-site residue. Histidine 161 is a (S)-2,3,4,5-tetrahydrodipicolinate binding site. Lysine 164 acts as the Proton donor in catalysis. 170–171 (GT) serves as a coordination point for (S)-2,3,4,5-tetrahydrodipicolinate.

It belongs to the DapB family.

Its subcellular location is the cytoplasm. It catalyses the reaction (S)-2,3,4,5-tetrahydrodipicolinate + NAD(+) + H2O = (2S,4S)-4-hydroxy-2,3,4,5-tetrahydrodipicolinate + NADH + H(+). The catalysed reaction is (S)-2,3,4,5-tetrahydrodipicolinate + NADP(+) + H2O = (2S,4S)-4-hydroxy-2,3,4,5-tetrahydrodipicolinate + NADPH + H(+). The protein operates within amino-acid biosynthesis; L-lysine biosynthesis via DAP pathway; (S)-tetrahydrodipicolinate from L-aspartate: step 4/4. Its function is as follows. Catalyzes the conversion of 4-hydroxy-tetrahydrodipicolinate (HTPA) to tetrahydrodipicolinate. This is 4-hydroxy-tetrahydrodipicolinate reductase from Agrobacterium fabrum (strain C58 / ATCC 33970) (Agrobacterium tumefaciens (strain C58)).